Consider the following 98-residue polypeptide: Integration host factor subunit alpha (98 aa).

Positions 51–71 (NFDLRDKNERPGRNPKTGEDI) are disordered. Over residues 53–69 (DLRDKNERPGRNPKTGE) the composition is skewed to basic and acidic residues.

It belongs to the bacterial histone-like protein family. In terms of assembly, heterodimer of an alpha and a beta chain.

This protein is one of the two subunits of integration host factor, a specific DNA-binding protein that functions in genetic recombination as well as in transcriptional and translational control. The polypeptide is Integration host factor subunit alpha (Vibrio parahaemolyticus serotype O3:K6 (strain RIMD 2210633)).